Reading from the N-terminus, the 309-residue chain is Manganese-dependent inorganic pyrophosphatase (309 aa).

Mn(2+) contacts are provided by His9, Asp13, Asp15, Asp75, His97, and Asp149.

Homodimer. The cofactor is Mn(2+).

The protein resides in the cytoplasm. The enzyme catalyses diphosphate + H2O = 2 phosphate + H(+). The protein is Manganese-dependent inorganic pyrophosphatase (ppaC) of Bacillus subtilis (strain 168).